The primary structure comprises 369 residues: tRNA/tmRNA (uracil-C(5))-methyltransferase (369 aa).

S-adenosyl-L-methionine is bound by residues Gln190, Tyr218, Asn223, Glu239, and Asp301. Cys326 acts as the Nucleophile in catalysis. The Proton acceptor role is filled by Glu360.

Belongs to the class I-like SAM-binding methyltransferase superfamily. RNA M5U methyltransferase family. TrmA subfamily.

It carries out the reaction uridine(54) in tRNA + S-adenosyl-L-methionine = 5-methyluridine(54) in tRNA + S-adenosyl-L-homocysteine + H(+). It catalyses the reaction uridine(341) in tmRNA + S-adenosyl-L-methionine = 5-methyluridine(341) in tmRNA + S-adenosyl-L-homocysteine + H(+). Dual-specificity methyltransferase that catalyzes the formation of 5-methyluridine at position 54 (m5U54) in all tRNAs, and that of position 341 (m5U341) in tmRNA (transfer-mRNA). The sequence is that of tRNA/tmRNA (uracil-C(5))-methyltransferase from Vibrio vulnificus (strain CMCP6).